We begin with the raw amino-acid sequence, 240 residues long: Adenylate dimethylallyltransferase (240 aa).

The protein belongs to the isopentenyl transferase family.

The catalysed reaction is dimethylallyl diphosphate + AMP = N(6)-(dimethylallyl)adenosine 5'-phosphate + diphosphate. Its function is as follows. Transfers dimethylallyl groups to AMP as part of the biosynthesis of cytokinin phytohormones. The chain is Adenylate dimethylallyltransferase (ipt) from Agrobacterium vitis (Rhizobium vitis).